A 60-amino-acid chain; its full sequence is Large ribosomal subunit protein uL30 (60 aa).

This sequence belongs to the universal ribosomal protein uL30 family. As to quaternary structure, part of the 50S ribosomal subunit.

The chain is Large ribosomal subunit protein uL30 from Shewanella sp. (strain ANA-3).